We begin with the raw amino-acid sequence, 376 residues long: uncharacterized protein (376 aa).

Residues 19–39 traverse the membrane as a helical segment; sequence FVLISLILLLNLGLLLGIQIY.

It to S.pombe SpAC5H10.12c.

The protein resides in the cytoplasm. The protein localises to the nucleus. Its subcellular location is the membrane. This is an uncharacterized protein from Schizosaccharomyces pombe (strain 972 / ATCC 24843) (Fission yeast).